Here is a 208-residue protein sequence, read N- to C-terminus: Histone H1t (208 aa).

Polar residues predominate over residues 1–12 (MSETAPAASSTL). Residues 1 to 39 (MSETAPAASSTLVPAPVEKPSSKRRGKKPGLAPARKPRG) are disordered. Ser9 is modified (phosphoserine). The 74-residue stretch at 38–111 (RGFSVSKLIP…GASGSFKLSK (74 aa)) folds into the H15 domain. Arg56 bears the Citrulline mark. Positions 95-208 (LVQTKGTGAS…TDLRKAAGRK (114 aa)) are disordered. Positions 121–134 (KGKKSASAKAKKMG) are enriched in basic residues. A Phosphoserine modification is found at Ser141. Over residues 143–154 (KSSKTKAVKKPK) the composition is skewed to basic residues. Thr156 bears the Phosphothreonine mark. Phosphoserine occurs at positions 163 and 178. Positions 199 to 208 (TDLRKAAGRK) are enriched in basic and acidic residues.

It belongs to the histone H1/H5 family. Phosphorylated in early spermatids. Post-translationally, citrullination at Arg-56 (H1R54ci) by PADI4 takes place within the DNA-binding site of H1 and results in its displacement from chromatin and global chromatin decondensation, thereby promoting pluripotency and stem cell maintenance. In terms of tissue distribution, testis-specific.

It localises to the nucleus. The protein localises to the chromosome. Testis-specific histone H1 that forms less compacted chromatin compared to other H1 histone subtypes. Formation of more relaxed chromatin may be required to promote chromatin architecture required for proper chromosome regulation during meiosis, such as homologous recombination. Histones H1 act as linkers that bind to nucleosomes and compact polynucleosomes into a higher-order chromatin configuration. This is Histone H1t from Mus musculus (Mouse).